Here is a 291-residue protein sequence, read N- to C-terminus: MSNERDTSRTPTPDHAEHNAFFPSPYSLSQYTSAKTDFDGADYPTPYNGGKKVLMIGTDERYILMQNGSMFSTGNHPVEMLLPMYHLDKAGFEFDVATLSGNPVKLEMWAMPGEDEAVKSIYAKYLPKLKAPQKLADLLEQAVADDSPYAAVFVPGGHGVLAGIPHSREVKRLLNAFLAKDRYIITLCHGPACLLAPAVEEKPEDYPFKGYEICVFPDALDTGANLEIGYMPGPLPWLVGENLQKLGVKILNKGITGQVHRDRKLLTGDSPLASNNLGKLAAKTLLEAFAR.

Positions 1-18 are enriched in basic and acidic residues; that stretch reads MSNERDTSRTPTPDHAEH. Positions 1–24 are disordered; sequence MSNERDTSRTPTPDHAEHNAFFPS. The active-site Nucleophile is the Cys188.

It belongs to the peptidase C56 family. HchA subfamily.

The protein resides in the cytoplasm. The catalysed reaction is N(omega)-(1-hydroxy-2-oxopropyl)-L-arginyl-[protein] + H2O = lactate + L-arginyl-[protein] + H(+). It catalyses the reaction N(6)-(1-hydroxy-2-oxopropyl)-L-lysyl-[protein] + H2O = lactate + L-lysyl-[protein] + H(+). The enzyme catalyses S-(1-hydroxy-2-oxopropyl)-L-cysteinyl-[protein] + H2O = lactate + L-cysteinyl-[protein] + H(+). It carries out the reaction N(omega)-(1-hydroxy-2-oxoethyl)-L-arginyl-[protein] + H2O = L-arginyl-[protein] + glycolate + H(+). The catalysed reaction is N(6)-(1-hydroxy-2-oxoethyl)-L-lysyl-[protein] + H2O = glycolate + L-lysyl-[protein] + H(+). It catalyses the reaction S-(1-hydroxy-2-oxoethyl)-L-cysteinyl-[protein] + H2O = glycolate + L-cysteinyl-[protein] + H(+). The enzyme catalyses N(2)-(1-hydroxy-2-oxopropyl)-dGTP + H2O = lactate + dGTP + H(+). It carries out the reaction N(2)-(1-hydroxy-2-oxopropyl)-GTP + H2O = lactate + GTP + H(+). The catalysed reaction is N(2)-(1-hydroxy-2-oxopropyl)-GDP + H2O = lactate + GDP + H(+). It catalyses the reaction N(2)-(1-hydroxy-2-oxopropyl)-GMP + H2O = lactate + GMP + H(+). The enzyme catalyses N(2)-(1-hydroxy-2-oxoethyl)-dGTP + H2O = dGTP + glycolate + H(+). It carries out the reaction N(2)-(1-hydroxy-2-oxoethyl)-GTP + H2O = glycolate + GTP + H(+). The catalysed reaction is N(2)-(1-hydroxy-2-oxoethyl)-GDP + H2O = glycolate + GDP + H(+). It catalyses the reaction N(2)-(1-hydroxy-2-oxoethyl)-GMP + H2O = glycolate + GMP + H(+). The enzyme catalyses an N(2)-(1-hydroxy-2-oxopropyl)-guanosine in RNA + H2O = a guanosine in RNA + lactate + H(+). It carries out the reaction an N(2)-(1-hydroxy-2-oxopropyl)-2'-deoxyguanosine in DNA + H2O = a 2'-deoxyguanosine in DNA + lactate + H(+). The catalysed reaction is an N(2)-(1-hydroxy-2-oxoethyl)-guanosine in RNA + H2O = a guanosine in RNA + glycolate + H(+). It catalyses the reaction an N(2)-(1-hydroxy-2-oxoethyl)-2'-deoxyguanosine in DNA + H2O = a 2'-deoxyguanosine in DNA + glycolate + H(+). Protein and nucleotide deglycase that catalyzes the deglycation of the Maillard adducts formed between amino groups of proteins or nucleotides and reactive carbonyl groups of glyoxals. Thus, functions as a protein deglycase that repairs methylglyoxal- and glyoxal-glycated proteins, and releases repaired proteins and lactate or glycolate, respectively. Deglycates cysteine, arginine and lysine residues in proteins, and thus reactivates these proteins by reversing glycation by glyoxals. Acts on early glycation intermediates (hemithioacetals and aminocarbinols), preventing the formation of Schiff bases and advanced glycation endproducts (AGE). Also functions as a nucleotide deglycase able to repair glycated guanine in the free nucleotide pool (GTP, GDP, GMP, dGTP) and in DNA and RNA. Is thus involved in a major nucleotide repair system named guanine glycation repair (GG repair), dedicated to reversing methylglyoxal and glyoxal damage via nucleotide sanitization and direct nucleic acid repair. Plays an important role in protecting cells from carbonyl stress. The sequence is that of Protein/nucleic acid deglycase HchA from Pseudomonas aeruginosa (strain UCBPP-PA14).